Reading from the N-terminus, the 123-residue chain is Large ribosomal subunit protein bL19 (123 aa).

This sequence belongs to the bacterial ribosomal protein bL19 family.

In terms of biological role, this protein is located at the 30S-50S ribosomal subunit interface and may play a role in the structure and function of the aminoacyl-tRNA binding site. This chain is Large ribosomal subunit protein bL19 (rplS), found in Treponema pallidum (strain Nichols).